We begin with the raw amino-acid sequence, 814 residues long: ATP-dependent 6-phosphofructokinase 1 (814 aa).

The tract at residues 1 to 420 is N-terminal catalytic PFK domain 1; sequence MDADASTITP…NLETYKLLTK (420 aa). Residues Gly-55, 118-119, and 148-151 contribute to the ATP site; these read RS and GDGS. Asp-149 provides a ligand contact to Mg(2+). Substrate-binding positions include 194-196, Arg-231, 238-240, Glu-294, Arg-322, and 328-331; these read SID, MGR, and HVQR. The Proton acceptor role is filled by Asp-196. Residues 421–435 form an interdomain linker region; sequence MRTVEKDNLSEGHKF. Positions 436 to 814 are C-terminal regulatory PFK domain 2; the sequence is NVAVINVGAP…EEESADSHMF (379 aa). Beta-D-fructose 2,6-bisphosphate-binding positions include Lys-505, 563-567, Arg-601, 608-610, Glu-664, Arg-690, 696-699, and Arg-771; these read TISNN, MGG, and HVQQ.

This sequence belongs to the phosphofructokinase type A (PFKA) family. ATP-dependent PFK group I subfamily. Eukaryotic two domain clade 'E' sub-subfamily. Homotetramer. Requires Mg(2+) as cofactor.

The protein resides in the cytoplasm. It carries out the reaction beta-D-fructose 6-phosphate + ATP = beta-D-fructose 1,6-bisphosphate + ADP + H(+). The protein operates within carbohydrate degradation; glycolysis; D-glyceraldehyde 3-phosphate and glycerone phosphate from D-glucose: step 3/4. Its activity is regulated as follows. Allosterically activated by ADP, AMP, or fructose 2,6-bisphosphate, and allosterically inhibited by ATP or citrate. In terms of biological role, catalyzes the phosphorylation of D-fructose 6-phosphate to fructose 1,6-bisphosphate by ATP, the first committing step of glycolysis. This Caenorhabditis elegans protein is ATP-dependent 6-phosphofructokinase 1.